An 807-amino-acid polypeptide reads, in one-letter code: Ribosomal RNA large subunit methyltransferase K/L (807 aa).

The THUMP domain maps to 67 to 182 (QIYKICLWSR…EKQAEIFLDL (116 aa)). The span at 548 to 560 (NTQYGNPEASAQS) shows a compositional bias: polar residues. A disordered region spans residues 548–602 (NTQYGNPEASAQSKESKNAPEPKKDNRNRYKGNKFQQAREEAKRQEAQRLAQKKR). 2 stretches are compositionally biased toward basic and acidic residues: residues 561-575 (KESK…DNRN) and 584-594 (QAREEAKRQEA).

It belongs to the methyltransferase superfamily. RlmKL family.

It localises to the cytoplasm. It catalyses the reaction guanosine(2445) in 23S rRNA + S-adenosyl-L-methionine = N(2)-methylguanosine(2445) in 23S rRNA + S-adenosyl-L-homocysteine + H(+). The catalysed reaction is guanosine(2069) in 23S rRNA + S-adenosyl-L-methionine = N(2)-methylguanosine(2069) in 23S rRNA + S-adenosyl-L-homocysteine + H(+). Specifically methylates the guanine in position 2445 (m2G2445) and the guanine in position 2069 (m7G2069) of 23S rRNA. This is Ribosomal RNA large subunit methyltransferase K/L from Psychrobacter sp. (strain PRwf-1).